Consider the following 506-residue polypeptide: Methylthioalkylmalate synthase 1, chloroplastic (506 aa).

The transit peptide at 1 to 49 directs the protein to the chloroplast; that stretch reads MASSLLTSSVMIPTTGSTVVGRSVLPFQSSLHSLRLTHSYKNPALFISC. A Pyruvate carboxyltransferase domain is found at 85–359; sequence VRVFDTTLRD…YTKIDTRQIM (275 aa). The residue at position 98 (Ser-98) is a Phosphoserine.

The protein belongs to the alpha-IPM synthase/homocitrate synthase family. In terms of assembly, monomer. The cofactor is Mn(2+). Highly expressed in leaves, flowers, roots and siliques. Not detected in flowers in PubMed:12432038.

The protein resides in the plastid. The protein localises to the chloroplast. The enzyme catalyses an omega-(methylsulfanyl)-2-oxoalkanoate + acetyl-CoA + H2O = a 2-(omega-methylsulfanyl)alkylmalate + CoA + H(+). Its activity is regulated as follows. 1 mM DTT required for activity. Activated by ATP and inhibited by iodoacetamide. Functionally, determines the side chain length of aliphatic glucosinolate structures. Catalyzes exclusively the condensation reactions of both the first and second methionine carbon chain elongation. This chain is Methylthioalkylmalate synthase 1, chloroplastic (MAM1), found in Arabidopsis thaliana (Mouse-ear cress).